Reading from the N-terminus, the 250-residue chain is NADH-quinone oxidoreductase subunit C (250 aa).

Belongs to the complex I 30 kDa subunit family. As to quaternary structure, NDH-1 is composed of 14 different subunits. Subunits NuoB, C, D, E, F, and G constitute the peripheral sector of the complex.

It is found in the cell inner membrane. The catalysed reaction is a quinone + NADH + 5 H(+)(in) = a quinol + NAD(+) + 4 H(+)(out). NDH-1 shuttles electrons from NADH, via FMN and iron-sulfur (Fe-S) centers, to quinones in the respiratory chain. The immediate electron acceptor for the enzyme in this species is believed to be ubiquinone. Couples the redox reaction to proton translocation (for every two electrons transferred, four hydrogen ions are translocated across the cytoplasmic membrane), and thus conserves the redox energy in a proton gradient. This chain is NADH-quinone oxidoreductase subunit C, found in Xylella fastidiosa (strain M23).